The primary structure comprises 430 residues: Adenylosuccinate synthetase (430 aa).

GTP-binding positions include 12 to 18 (GDEGKGK) and 40 to 42 (GHT). Asp-13 serves as the catalytic Proton acceptor. 2 residues coordinate Mg(2+): Asp-13 and Gly-40. IMP-binding positions include 13–16 (DEGK), 38–41 (NAGH), Thr-128, Arg-142, Gln-223, Thr-238, and Arg-302. The active-site Proton donor is the His-41. 298-304 (TTTGRPR) provides a ligand contact to substrate. GTP contacts are provided by residues Arg-304, 330 to 332 (SID), and 412 to 414 (SVG).

This sequence belongs to the adenylosuccinate synthetase family. Homodimer. It depends on Mg(2+) as a cofactor.

The protein localises to the cytoplasm. It catalyses the reaction IMP + L-aspartate + GTP = N(6)-(1,2-dicarboxyethyl)-AMP + GDP + phosphate + 2 H(+). It participates in purine metabolism; AMP biosynthesis via de novo pathway; AMP from IMP: step 1/2. Its function is as follows. Plays an important role in the de novo pathway of purine nucleotide biosynthesis. Catalyzes the first committed step in the biosynthesis of AMP from IMP. The chain is Adenylosuccinate synthetase from Streptococcus suis (strain 98HAH33).